Reading from the N-terminus, the 122-residue chain is Probable transcription factor PqrA (122 aa).

Residues 7-107 (NDILKWLETQ…NTTPAKFREN (101 aa)) form the HTH araC/xylS-type domain. 2 DNA-binding regions (H-T-H motif) span residues 26–47 (DTIA…KDFK) and 74–97 (ILDI…KKHF).

In terms of biological role, upon expression in E.coli strain KY2563 confers resistance to antibiotics ofloxacin, ciprofloxacin, tetracycline, chloramphenicol, and ceftazidime (increases minimal inhibitory concentration by 8-32 times); also decreases expression of OmpF. This Proteus vulgaris protein is Probable transcription factor PqrA.